The chain runs to 188 residues: Photosystem I assembly protein Ycf4 (188 aa).

Helical transmembrane passes span 28 to 48 (WATV…SSYL) and 68 to 88 (IAIG…WATI).

Belongs to the Ycf4 family.

The protein resides in the cellular thylakoid membrane. In terms of biological role, seems to be required for the assembly of the photosystem I complex. The protein is Photosystem I assembly protein Ycf4 of Cyanothece sp. (strain PCC 7425 / ATCC 29141).